The chain runs to 494 residues: Probable cytosol aminopeptidase (494 aa).

Residues lysine 260 and aspartate 265 each coordinate Mn(2+). Lysine 272 is an active-site residue. Residues aspartate 283, aspartate 342, and glutamate 344 each contribute to the Mn(2+) site. The active site involves arginine 346.

Belongs to the peptidase M17 family. Mn(2+) serves as cofactor.

Its subcellular location is the cytoplasm. The catalysed reaction is Release of an N-terminal amino acid, Xaa-|-Yaa-, in which Xaa is preferably Leu, but may be other amino acids including Pro although not Arg or Lys, and Yaa may be Pro. Amino acid amides and methyl esters are also readily hydrolyzed, but rates on arylamides are exceedingly low.. The enzyme catalyses Release of an N-terminal amino acid, preferentially leucine, but not glutamic or aspartic acids.. In terms of biological role, presumably involved in the processing and regular turnover of intracellular proteins. Catalyzes the removal of unsubstituted N-terminal amino acids from various peptides. This Bacillus cereus (strain AH187) protein is Probable cytosol aminopeptidase.